The chain runs to 122 residues: S-adenosylmethionine decarboxylase proenzyme (122 aa).

The active-site Schiff-base intermediate with substrate; via pyruvic acid is serine 63. Residue serine 63 is modified to Pyruvic acid (Ser); by autocatalysis. Histidine 68 functions as the Proton acceptor; for processing activity in the catalytic mechanism. Cysteine 83 serves as the catalytic Proton donor; for catalytic activity.

The protein belongs to the prokaryotic AdoMetDC family. Type 1 subfamily. In terms of assembly, heterotetramer of two alpha and two beta chains arranged as a dimer of alpha/beta heterodimers. Pyruvate serves as cofactor. Post-translationally, is synthesized initially as an inactive proenzyme. Formation of the active enzyme involves a self-maturation process in which the active site pyruvoyl group is generated from an internal serine residue via an autocatalytic post-translational modification. Two non-identical subunits are generated from the proenzyme in this reaction, and the pyruvate is formed at the N-terminus of the alpha chain, which is derived from the carboxyl end of the proenzyme. The post-translation cleavage follows an unusual pathway, termed non-hydrolytic serinolysis, in which the side chain hydroxyl group of the serine supplies its oxygen atom to form the C-terminus of the beta chain, while the remainder of the serine residue undergoes an oxidative deamination to produce ammonia and the pyruvoyl group blocking the N-terminus of the alpha chain.

The enzyme catalyses S-adenosyl-L-methionine + H(+) = S-adenosyl 3-(methylsulfanyl)propylamine + CO2. Its pathway is amine and polyamine biosynthesis; S-adenosylmethioninamine biosynthesis; S-adenosylmethioninamine from S-adenosyl-L-methionine: step 1/1. Its function is as follows. Catalyzes the decarboxylation of S-adenosylmethionine to S-adenosylmethioninamine (dcAdoMet), the propylamine donor required for the synthesis of the polyamines spermine and spermidine from the diamine putrescine. This is S-adenosylmethionine decarboxylase proenzyme from Methanococcus maripaludis (strain C5 / ATCC BAA-1333).